Reading from the N-terminus, the 251-residue chain is Probable phosphatase Sputw3181_2734 (251 aa).

Residues H8, H10, H16, H41, E74, H102, H132, D193, and H195 each contribute to the Zn(2+) site.

This sequence belongs to the PHP family. Requires Zn(2+) as cofactor.

This is Probable phosphatase Sputw3181_2734 from Shewanella sp. (strain W3-18-1).